The following is an 84-amino-acid chain: Small ribosomal subunit protein bS18B (84 aa).

Basic residues predominate over residues 1-10; the sequence is MAVKRAPSKK. The tract at residues 1 to 20 is disordered; that stretch reads MAVKRAPSKKVRAEQARRPK.

The protein belongs to the bacterial ribosomal protein bS18 family. In terms of assembly, part of the 30S ribosomal subunit. Forms a tight heterodimer with protein bS6.

In terms of biological role, binds as a heterodimer with protein bS6 to the central domain of the 16S rRNA, where it helps stabilize the platform of the 30S subunit. The protein is Small ribosomal subunit protein bS18B of Nocardia farcinica (strain IFM 10152).